A 568-amino-acid chain; its full sequence is Sulfite reductase [NADPH] hemoprotein beta-component (568 aa).

Positions 426, 432, 471, and 475 each coordinate [4Fe-4S] cluster. Cys475 contributes to the siroheme binding site.

This sequence belongs to the nitrite and sulfite reductase 4Fe-4S domain family. In terms of assembly, alpha(8)-beta(8). The alpha component is a flavoprotein, the beta component is a hemoprotein. It depends on siroheme as a cofactor. [4Fe-4S] cluster is required as a cofactor.

It carries out the reaction hydrogen sulfide + 3 NADP(+) + 3 H2O = sulfite + 3 NADPH + 4 H(+). It functions in the pathway sulfur metabolism; hydrogen sulfide biosynthesis; hydrogen sulfide from sulfite (NADPH route): step 1/1. Component of the sulfite reductase complex that catalyzes the 6-electron reduction of sulfite to sulfide. This is one of several activities required for the biosynthesis of L-cysteine from sulfate. This is Sulfite reductase [NADPH] hemoprotein beta-component from Xylella fastidiosa (strain M23).